A 342-amino-acid chain; its full sequence is Isopentenyl-diphosphate delta-isomerase (342 aa).

11–12 (RK) serves as a coordination point for substrate. FMN-binding positions include Ser-68, 69-71 (SMT), Ser-99, and Asn-128. 99-101 (SQR) contacts substrate. Gln-162 is a binding site for substrate. Glu-163 is a binding site for Mg(2+). Residues Lys-194, Ser-219, Thr-224, 275–277 (GVR), and 296–297 (AK) contribute to the FMN site.

The protein belongs to the IPP isomerase type 2 family. Homooctamer. Dimer of tetramers. FMN serves as cofactor. NADPH is required as a cofactor. Requires Mg(2+) as cofactor.

The protein resides in the cytoplasm. The catalysed reaction is isopentenyl diphosphate = dimethylallyl diphosphate. Involved in the biosynthesis of isoprenoids. Catalyzes the 1,3-allylic rearrangement of the homoallylic substrate isopentenyl (IPP) to its allylic isomer, dimethylallyl diphosphate (DMAPP). The polypeptide is Isopentenyl-diphosphate delta-isomerase (Legionella pneumophila (strain Paris)).